Here is a 343-residue protein sequence, read N- to C-terminus: MQEILIPLKEKNYKVFLGELPEIKLKQKALIISDSIVAGLHLPYLLERLKALEVRVCVIESGEKYKNFHSLERILNNAFEMQLNRHSLMIALGGGVISDMVGFASSIYFRGIDFINIPTTLLAQVDASVGGKTGINTPYGKNLIGSFHQPKAVYMDLAFLKTLEKREFQAGVAEIIKMAVCFDKNLVERLETKDLKDCLEEVIFQSVNIKAQVVVQDEKEQNIRAGLNYGHTFGHAIEKETDYERFLHGEAIAIGMRMANDLALSLGMLTLKEYERIENLLKKFDLIFHYKILDLQKFYERLFLDKKSENKTIKFILPKGVGAFEVASHIPKETIIKVLEKWH.

NAD(+) is bound by residues 61–66 (SGEKYK), 95–96 (GV), 119–120 (TT), K132, K141, N142, and 159–162 (FLKT). Zn(2+)-binding residues include E174, H231, and H248.

This sequence belongs to the sugar phosphate cyclases superfamily. Dehydroquinate synthase family. In terms of assembly, homodimer. NAD(+) is required as a cofactor. Co(2+) serves as cofactor. The cofactor is Zn(2+).

The protein localises to the cytoplasm. The catalysed reaction is 7-phospho-2-dehydro-3-deoxy-D-arabino-heptonate = 3-dehydroquinate + phosphate. Its pathway is metabolic intermediate biosynthesis; chorismate biosynthesis; chorismate from D-erythrose 4-phosphate and phosphoenolpyruvate: step 2/7. In terms of biological role, catalyzes the conversion of 3-deoxy-D-arabino-heptulosonate 7-phosphate (DAHP) to dehydroquinate (DHQ). The sequence is that of 3-dehydroquinate synthase from Helicobacter pylori (strain ATCC 700392 / 26695) (Campylobacter pylori).